Reading from the N-terminus, the 156-residue chain is Male-specific protein scotti (156 aa).

The interval 26–48 (TADAGDDADTLEDGQQQQQQQHQ) is disordered. N-linked (GlcNAc...) asparagine glycosylation is present at Asn137.

It belongs to the male-specific scotti family.

Post-meiotically transcribed gene that has a role in late spermiogenesis; required for actin cone progression during spermatid individualization. This Drosophila erecta (Fruit fly) protein is Male-specific protein scotti.